Consider the following 480-residue polypeptide: Amino acid permease 5 (480 aa).

Residues 1 to 25 (MVVQNVQDLDVLPKHSSDSFDDDGR) form a disordered region. The Cytoplasmic portion of the chain corresponds to 1–31 (MVVQNVQDLDVLPKHSSDSFDDDGRPKRTGT). Residues 11–25 (VLPKHSSDSFDDDGR) are compositionally biased toward basic and acidic residues. Helical transmembrane passes span 32–52 (VWTASAHIITAVIGSGVLSLA) and 53–73 (WAVAQIGWIGGPVAMLLFSFV). The Cytoplasmic portion of the chain corresponds to 74-120 (TFYTSTLLCSCYRSGDSVTGKRNYTYMDAIHSNLGGIKVKVCGVVQY). The helical transmembrane segment at 121–141 (VNLFGTAIGYTIASAISLVAI) threads the bilayer. Residues 142–157 (QRTSCQQMNGPNDPCH) lie on the Extracellular side of the membrane. The helical transmembrane segment at 158–178 (VNGNVYMIAFGIVQIIFSQIP) threads the bilayer. At 179–182 (DFDQ) the chain is on the cytoplasmic side. A helical membrane pass occupies residues 183 to 203 (LWWLSIVAAVMSFAYSAIGLG). At 204-241 (LGVSKVVENKEIKGSLTGVTVGTVTLSGTVTSSQKIWR) the chain is on the extracellular side. Residues 242 to 262 (TFQSLGNIAFAYSYSMILIEI) traverse the membrane as a helical segment. Residues 263 to 280 (QDTVKSPPAEVNTMRKAT) are Cytoplasmic-facing. The chain crosses the membrane as a helical span at residues 281–301 (FVSVAVTTVFYMLCGCVGYAA). At 302-328 (FGDNAPGNLLAHGGFRNPYWLLDIANL) the chain is on the extracellular side. Residues 329 to 349 (AIVIHLVGAYQVYCQPLFAFV) traverse the membrane as a helical segment. Over 350–383 (EKEASRRFPESEFVTKEIKIQLFPGKPFNLNLFR) the chain is Cytoplasmic. Residues 384-404 (LVWRTFFVMTTTLISMLMPFF) form a helical membrane-spanning segment. Residues 405-406 (ND) lie on the Extracellular side of the membrane. Residues 407-427 (VVGLLGAIGFWPLTVYFPVEM) traverse the membrane as a helical segment. The Cytoplasmic portion of the chain corresponds to 428–445 (YIAQKNVPRWGTKWVCLQ). A helical transmembrane segment spans residues 446–466 (VLSVTCLFVSVAAAAGSVIGI). Residues 467–480 (VSDLKVYKPFQSEF) lie on the Extracellular side of the membrane.

It belongs to the amino acid/polyamine transporter 2 family. Amino acid/auxin permease (AAAP) (TC 2.A.18.2) subfamily. In terms of tissue distribution, expressed in leaves, stems, roots, siliques and flowers.

The protein localises to the cell membrane. With respect to regulation, inhibited by 2,4-dinitrophenol. Its function is as follows. Amino acid-proton symporter. Stereospecific transporter with a broad specificity for glutamate and both neutral and basic amino acids. Reduced affinities for asparagine and valine. High affinity transport of the cationic amino acids arginine and lysine, but not of histidine. The sequence is that of Amino acid permease 5 (AAP5) from Arabidopsis thaliana (Mouse-ear cress).